A 331-amino-acid chain; its full sequence is ABSCISIC ACID-INSENSITIVE 5-like protein 1 (331 aa).

Phosphoserine is present on residues Ser40 and Ser98. At Thr143 the chain carries Phosphothreonine. Residues 247–310 (MERRQRRMIK…RQEIISRSKQ (64 aa)) enclose the bZIP domain. Residues 249–268 (RRQRRMIKNRESAARSRARR) form a basic motif region. A leucine-zipper region spans residues 275-289 (LELELNNLTEENTKL). Residues 296–320 (NEKKRRQEIISRSKQVTKEKSGDKL) are compositionally biased toward basic and acidic residues. The interval 296 to 331 (NEKKRRQEIISRSKQVTKEKSGDKLRKIRRMASAGW) is disordered.

The protein belongs to the bZIP family. ABI5 subfamily. DNA-binding heterodimer with AREB3/DPBF3 or EEL/DPBF4. Interacts with the AFP proteins AFP1, AFP2 and AFP3. In terms of tissue distribution, predominantly expressed in seeds.

It is found in the nucleus. Functionally, could participate in abscisic acid-regulated gene expression during seed development. This chain is ABSCISIC ACID-INSENSITIVE 5-like protein 1 (DPBF2), found in Arabidopsis thaliana (Mouse-ear cress).